The chain runs to 512 residues: ATP synthase subunit alpha (512 aa).

169–176 (GDRQTGKT) is a binding site for ATP.

The protein belongs to the ATPase alpha/beta chains family. In terms of assembly, F-type ATPases have 2 components, CF(1) - the catalytic core - and CF(0) - the membrane proton channel. CF(1) has five subunits: alpha(3), beta(3), gamma(1), delta(1), epsilon(1). CF(0) has three main subunits: a(1), b(2) and c(9-12). The alpha and beta chains form an alternating ring which encloses part of the gamma chain. CF(1) is attached to CF(0) by a central stalk formed by the gamma and epsilon chains, while a peripheral stalk is formed by the delta and b chains.

It is found in the cell membrane. The enzyme catalyses ATP + H2O + 4 H(+)(in) = ADP + phosphate + 5 H(+)(out). Produces ATP from ADP in the presence of a proton gradient across the membrane. The alpha chain is a regulatory subunit. The polypeptide is ATP synthase subunit alpha (Buchnera aphidicola subsp. Acyrthosiphon pisum (strain 5A)).